A 235-amino-acid polypeptide reads, in one-letter code: Large ribosomal subunit protein uL1 (235 aa).

Belongs to the universal ribosomal protein uL1 family. In terms of assembly, part of the 50S ribosomal subunit.

Functionally, binds directly to 23S rRNA. The L1 stalk is quite mobile in the ribosome, and is involved in E site tRNA release. In terms of biological role, protein L1 is also a translational repressor protein, it controls the translation of the L11 operon by binding to its mRNA. This Nitratidesulfovibrio vulgaris (strain ATCC 29579 / DSM 644 / CCUG 34227 / NCIMB 8303 / VKM B-1760 / Hildenborough) (Desulfovibrio vulgaris) protein is Large ribosomal subunit protein uL1.